Consider the following 295-residue polypeptide: Probable aspartoacylase (295 aa).

The Zn(2+) site is built by histidine 13 and glutamate 16. Residues arginine 54 and 61–62 (NR) contribute to the substrate site. Histidine 100 contributes to the Zn(2+) binding site. 2 residues coordinate substrate: glutamate 158 and tyrosine 268.

The protein belongs to the AspA/AstE family. Aspartoacylase subfamily. Zn(2+) is required as a cofactor.

It carries out the reaction an N-acyl-L-aspartate + H2O = a carboxylate + L-aspartate. This Prochlorococcus marinus subsp. pastoris (strain CCMP1986 / NIES-2087 / MED4) protein is Probable aspartoacylase.